Consider the following 272-residue polypeptide: NH(3)-dependent NAD(+) synthetase (272 aa).

Position 45–52 (45–52) interacts with ATP; it reads GISGGQDS. Aspartate 51 is a Mg(2+) binding site. Arginine 138 provides a ligand contact to deamido-NAD(+). Threonine 158 serves as a coordination point for ATP. Residue glutamate 163 participates in Mg(2+) binding. Deamido-NAD(+) is bound by residues lysine 171 and aspartate 178. ATP is bound by residues lysine 187 and threonine 209. 258-259 contacts deamido-NAD(+); sequence HK.

This sequence belongs to the NAD synthetase family. Homodimer.

It catalyses the reaction deamido-NAD(+) + NH4(+) + ATP = AMP + diphosphate + NAD(+) + H(+). Its pathway is cofactor biosynthesis; NAD(+) biosynthesis; NAD(+) from deamido-NAD(+) (ammonia route): step 1/1. Its function is as follows. Catalyzes the ATP-dependent amidation of deamido-NAD to form NAD. Uses ammonia as a nitrogen source. The protein is NH(3)-dependent NAD(+) synthetase of Bacillus licheniformis (strain ATCC 14580 / DSM 13 / JCM 2505 / CCUG 7422 / NBRC 12200 / NCIMB 9375 / NCTC 10341 / NRRL NRS-1264 / Gibson 46).